Reading from the N-terminus, the 617-residue chain is DNA mismatch repair protein MutL (617 aa).

Belongs to the DNA mismatch repair MutL/HexB family.

In terms of biological role, this protein is involved in the repair of mismatches in DNA. It is required for dam-dependent methyl-directed DNA mismatch repair. May act as a 'molecular matchmaker', a protein that promotes the formation of a stable complex between two or more DNA-binding proteins in an ATP-dependent manner without itself being part of a final effector complex. This Christiangramia forsetii (strain DSM 17595 / CGMCC 1.15422 / KT0803) (Gramella forsetii) protein is DNA mismatch repair protein MutL.